Here is a 318-residue protein sequence, read N- to C-terminus: Transaldolase (318 aa).

Catalysis depends on Lys-132, which acts as the Schiff-base intermediate with substrate.

The protein belongs to the transaldolase family. Type 1 subfamily. Homodimer.

Its subcellular location is the cytoplasm. The enzyme catalyses D-sedoheptulose 7-phosphate + D-glyceraldehyde 3-phosphate = D-erythrose 4-phosphate + beta-D-fructose 6-phosphate. Its pathway is carbohydrate degradation; pentose phosphate pathway; D-glyceraldehyde 3-phosphate and beta-D-fructose 6-phosphate from D-ribose 5-phosphate and D-xylulose 5-phosphate (non-oxidative stage): step 2/3. Functionally, transaldolase is important for the balance of metabolites in the pentose-phosphate pathway. The polypeptide is Transaldolase (Shewanella baltica (strain OS223)).